The sequence spans 333 residues: L-lactate dehydrogenase A chain (333 aa).

Ala-2 carries the N-acetylalanine modification. NAD(+) is bound by residues 30–58 and Arg-100; that span reads GAVG…MEDK. Substrate contacts are provided by Arg-107, Asn-139, and Arg-170. Asn-139 contacts NAD(+). His-194 serves as the catalytic Proton acceptor. Position 249 (Thr-249) interacts with substrate.

This sequence belongs to the LDH/MDH superfamily. LDH family. Homotetramer.

Its subcellular location is the cytoplasm. It catalyses the reaction (S)-lactate + NAD(+) = pyruvate + NADH + H(+). Its pathway is fermentation; pyruvate fermentation to lactate; (S)-lactate from pyruvate: step 1/1. In terms of biological role, interconverts simultaneously and stereospecifically pyruvate and lactate with concomitant interconversion of NADH and NAD(+). In Squalus acanthias (Spiny dogfish), this protein is L-lactate dehydrogenase A chain (ldha).